A 353-amino-acid polypeptide reads, in one-letter code: Uroporphyrinogen decarboxylase (353 aa).

Substrate contacts are provided by residues 29–33, Asp79, Tyr156, Thr211, and His329; that span reads RQAGR.

It belongs to the uroporphyrinogen decarboxylase family. As to quaternary structure, homodimer.

The protein localises to the cytoplasm. It carries out the reaction uroporphyrinogen III + 4 H(+) = coproporphyrinogen III + 4 CO2. It functions in the pathway porphyrin-containing compound metabolism; protoporphyrin-IX biosynthesis; coproporphyrinogen-III from 5-aminolevulinate: step 4/4. In terms of biological role, catalyzes the decarboxylation of four acetate groups of uroporphyrinogen-III to yield coproporphyrinogen-III. The chain is Uroporphyrinogen decarboxylase from Alcanivorax borkumensis (strain ATCC 700651 / DSM 11573 / NCIMB 13689 / SK2).